The primary structure comprises 278 residues: Proline-rich 28 kDa antigen homolog (278 aa).

An N-terminal signal peptide occupies residues 1–28 (MIQSTQTWRVLAGGLAATAMGVTVFAGG).

This sequence to M.tuberculosis Rv0040c.

In Mycobacterium leprae (strain TN), this protein is Proline-rich 28 kDa antigen homolog.